The following is a 183-amino-acid chain: Deoxyuridine 5'-triphosphate nucleotidohydrolase (183 aa).

Substrate is bound by residues 67 to 69 (RSG), asparagine 80, 84 to 86 (TID), and lysine 94. The disordered stretch occupies residues 138–183 (RAEGGFGSTGGHAGLDPASGTSGQVAEGGPTGGNRYASVVSDREGQ). Residues 141-150 (GGFGSTGGHA) are compositionally biased toward gly residues.

It belongs to the dUTPase family. The cofactor is Mg(2+).

The catalysed reaction is dUTP + H2O = dUMP + diphosphate + H(+). Its pathway is pyrimidine metabolism; dUMP biosynthesis; dUMP from dCTP (dUTP route): step 2/2. Its function is as follows. This enzyme is involved in nucleotide metabolism: it produces dUMP, the immediate precursor of thymidine nucleotides and it decreases the intracellular concentration of dUTP so that uracil cannot be incorporated into DNA. This chain is Deoxyuridine 5'-triphosphate nucleotidohydrolase, found in Streptomyces coelicolor (strain ATCC BAA-471 / A3(2) / M145).